Consider the following 115-residue polypeptide: Large ribosomal subunit protein bL20 (115 aa).

It belongs to the bacterial ribosomal protein bL20 family.

In terms of biological role, binds directly to 23S ribosomal RNA and is necessary for the in vitro assembly process of the 50S ribosomal subunit. It is not involved in the protein synthesizing functions of that subunit. This Chlorobium chlorochromatii (strain CaD3) protein is Large ribosomal subunit protein bL20.